A 185-amino-acid chain; its full sequence is Ribosome-recycling factor (185 aa).

It belongs to the RRF family.

Its subcellular location is the cytoplasm. Responsible for the release of ribosomes from messenger RNA at the termination of protein biosynthesis. May increase the efficiency of translation by recycling ribosomes from one round of translation to another. This is Ribosome-recycling factor from Symbiobacterium thermophilum (strain DSM 24528 / JCM 14929 / IAM 14863 / T).